A 336-amino-acid polypeptide reads, in one-letter code: MTTLSPENSLSARQSASFILVKRKPPIDKTEWDSFFDESGHLAKSRDFICVNILERGLHPFVRTEAWKFLTGYFSWQSSQDERLTVDSMRRKNYKALCQMYEKIQPLLENLHRNFTETRNNIARDIQKIYDKDPLGNVLIDKKRLEKILLLSYVCNTQAEYQQGFHEMMMLFQLMVEHDHETFWLFQFFLQKTEHSCVINIGVAKNLDMLSTLITFLDPVFAEHLKGKGAGAVQSLFPWFCFCFQRAFKSFDDVWRLWEVLLTGKPCRNFQVLVAYSMLQMVREQVLQESMGGDDILLACNNLIDLDADELISAACVVYAELIQKDVPQTLKDFFL.

The Rab-GAP TBC domain occupies 57–265 (GLHPFVRTEA…RLWEVLLTGK (209 aa)).

As to quaternary structure, interacts with ACTB. Interacts with ARMC12, TOMM20, DNAH7 and RAP1A. Interacts with RAB10. In terms of tissue distribution, expressed in round and elongated spermatids (at protein level). Expressed specifically in adult testis and very weakly in fetal brain.

It is found in the cytoplasmic vesicle. Its subcellular location is the secretory vesicle. The protein localises to the acrosome. It localises to the cytoplasm. The protein resides in the cytoskeleton. Acts as a GTPase-activating protein for Rab family protein(s). Essential for the establishment of male fertility, and is required for both the production of normal sperm number and sperm function. Plays an important role in the formation of intact mitochondria, outer dense fibers and axoneme within the sperm tail. Essential for sperm mitochondrial sheath formation and for the interactions of ARMC12 with VDAC2 and VDAC3. May be involved in acrosome formation and cytoskeletal reorganization during spermiogenesis, possibly by regulating RAB3A activity. This chain is TBC1 domain family member 21 (TBC1D21), found in Homo sapiens (Human).